The chain runs to 215 residues: Ras-related protein Rab-5A (215 aa).

GTP-binding residues include Ser-29, Ala-30, Gly-32, Lys-33, Ser-34, Ser-35, His-46, Glu-47, Thr-52, and Gly-78. Position 34 (Ser-34) interacts with Mg(2+). 2 short sequence motifs (switch) span residues 44-56 (QFHE…IGAA) and 77-93 (AGQE…YRGA). Thr-52 lines the Mg(2+) pocket. Residue Ser-84 is modified to Phosphoserine. GTP contacts are provided by Asn-133, Lys-134, Asp-136, Ala-164, and Lys-165. The segment at 181-215 (LPKNEPQNPGANSARGRGVDLTEPTQPTRSQCCSN) is disordered. The segment covering 203-215 (EPTQPTRSQCCSN) has biased composition (polar residues). S-geranylgeranyl cysteine attachment occurs at residues Cys-212 and Cys-213.

Belongs to the small GTPase superfamily. Rab family. Interacts with GDI1; this promotes dissociation from membranes; phosphorylation at Ser-84 disrupts this interaction. Interacts with GDI2; phosphorylation at Ser-84 disrupts the interaction. Binds EEA1. Interacts with ALS2CL, SUN2, ZFYVE20 and RUFY1. Interacts with RIN1 and GAPVD1, which regulate its pathway, probably by acting as a GEF. Interacts with SGSM1 and SGSM3. Interacts with PIK3CB. Interacts with RABEP1 and RINL. Interacts with OCRL and INPP5F. May be a component of a complex composed of RAB5A, DYN2 and PIK3C3. Does not interact with the BLOC-3 complex (heterodimer of HPS1 and HPS4). Interacts with CLN5. Interacts with APPL2. Interacts with F8A1/F8A2/F8A3. Found in a complex with F8A1/F8A2/F8A3, HTT and RAB5A; mediates the recruitment of HTT by RAB5A onto early endosomes. Interacts with ATP9A. Interacts with PPP1R21; mediates the recruitment of FERRY complex by RAB5A onto early endosomes. Mg(2+) serves as cofactor. In terms of processing, phosphorylation of Ser-84 in the switch II region by LRRK2 prevents the association of RAB regulatory proteins, including RAB GDP dissociation inhibitors GDI1 and GDI2.

The protein resides in the cell membrane. It is found in the early endosome membrane. Its subcellular location is the melanosome. The protein localises to the cytoplasmic vesicle. It localises to the cell projection. The protein resides in the ruffle. It is found in the cytoplasm. Its subcellular location is the cytosol. The protein localises to the membrane. It localises to the phagosome membrane. The protein resides in the endosome membrane. The enzyme catalyses GTP + H2O = GDP + phosphate + H(+). With respect to regulation, regulated by guanine nucleotide exchange factors (GEFs) including RINL, which promote the exchange of bound GDP for free GTP. Regulated by GTPase activating proteins (GAPs) which increase the GTP hydrolysis activity. Inhibited by GDP dissociation inhibitors (GDIs). Functionally, the small GTPases Rab are key regulators of intracellular membrane trafficking, from the formation of transport vesicles to their fusion with membranes. Rabs cycle between an inactive GDP-bound form and an active GTP-bound form that is able to recruit to membranes different sets of downstream effectors directly responsible for vesicle formation, movement, tethering and fusion. RAB5A is required for the fusion of plasma membranes and early endosomes. Contributes to the regulation of filopodia extension. Required for the exosomal release of SDCBP, CD63, PDCD6IP and syndecan. Regulates maturation of apoptotic cell-containing phagosomes, probably downstream of DYN2 and PIK3C3. This Canis lupus familiaris (Dog) protein is Ras-related protein Rab-5A (RAB5A).